The following is a 462-amino-acid chain: MLVKSCIFLSFLAIAAYGQAHLKYTKEMNDPEYVQQNVHHQGHGHAHGGHGHAHDADGGCPYAKAAAAEAATAAAHDHGHAHDHDHGHAHDHGHAHDHHGHSHDEEEDHHHGHAHDHHGHSHEDHGHSHGAESAKQVGDEYQYTGFLSFLNDAKTRLWVYAISATLLISAAPCFILMFIPIQANTSESGPLLKVLLAFGSGGLLGDAFLHLIPHATPAGDGHGHSHSHGHSHGGGGHSHGAHDMSVGGWVLGGIIAFLTVEKLVRILRGEDGHGHSHGHSHGGEKKETKEKDSKDKVAKKEEKPEKDEQSIKVTAYLNLAADFTHNFTDGLAIGASFIAGTTVGIVTMITVLVHEVPHEIGDFAILIQSGYSKKKAMLIQLVTALGALSGCVISLFSADADALADAAASSWVLPFTAGGFIYIATVSVIPELLENSSFFQTVKEIFAILTGIFLMYLIAIYE.

A helical membrane pass occupies residues 2 to 22; the sequence is LVKSCIFLSFLAIAAYGQAHL. Residues 39 to 134 form a disordered region; it reads HHQGHGHAHG…HGHSHGAESA (96 aa). Over residues 40–51 the composition is skewed to basic residues; sequence HQGHGHAHGGHG. The segment covering 65-74 has biased composition (low complexity); it reads AAAAEAATAA. Basic and acidic residues predominate over residues 75 to 94; that stretch reads AHDHGHAHDHDHGHAHDHGH. The segment covering 111–120 has biased composition (basic residues); it reads HGHAHDHHGH. The segment covering 121-132 has biased composition (basic and acidic residues); it reads SHEDHGHSHGAE. The helical transmembrane segment at 161–181 threads the bilayer; that stretch reads AISATLLISAAPCFILMFIPI. N184 carries an N-linked (GlcNAc...) asparagine glycan. A helical membrane pass occupies residues 194–214; that stretch reads VLLAFGSGGLLGDAFLHLIPH. A disordered region spans residues 219-239; the sequence is GDGHGHSHSHGHSHGGGGHSH. The helical transmembrane segment at 244 to 264 threads the bilayer; sequence MSVGGWVLGGIIAFLTVEKLV. The segment at 270–307 is disordered; the sequence is EDGHGHSHGHSHGGEKKETKEKDSKDKVAKKEEKPEKD. A compositionally biased stretch (basic and acidic residues) spans 281-307; it reads HGGEKKETKEKDSKDKVAKKEEKPEKD. N-linked (GlcNAc...) asparagine glycosylation occurs at N326. 3 helical membrane-spanning segments follow: residues 333–353, 376–396, and 410–430; these read IGASFIAGTTVGIVTMITVLV, AMLIQLVTALGALSGCVISLF, and SWVLPFTAGGFIYIATVSVIP. N-linked (GlcNAc...) asparagine glycosylation occurs at N435. A helical transmembrane segment spans residues 441-461; the sequence is TVKEIFAILTGIFLMYLIAIY.

This sequence belongs to the ZIP transporter (TC 2.A.5) family. KE4/Catsup subfamily. Expressed in somatic tissues.

The protein localises to the membrane. Functionally, zinc transporter. The polypeptide is Zinc transporter zipt-7.2 (Caenorhabditis elegans).